A 469-amino-acid polypeptide reads, in one-letter code: Ubiquitin carboxyl-terminal hydrolase MINDY-1 (469 aa).

The tract at residues 1–85 (MEYHQPEDPA…APPGPTLGTL (85 aa)) is disordered. Over residues 23-53 (ENHEVLAGPDEHPQDTDARDADGEAREREPA) the composition is skewed to basic and acidic residues. Positions 66–76 (LESPLPEASSA) are enriched in low complexity. The residue at position 103 (serine 103) is a Phosphoserine. Cysteine 137 functions as the Nucleophile in the catalytic mechanism. Catalysis depends on histidine 319, which acts as the Proton acceptor. The segment at 388-426 (QVDQDYLIALSLQQQQPRGPLGLTDLELAQQLQQEEYQQ) is ubiquitin-binding domain (UBD). Serine 441 carries the post-translational modification Phosphoserine. Positions 441 to 469 (SLQGRGATSGRPAGERRQRPKHESDCILL) are disordered. The segment covering 453–469 (AGERRQRPKHESDCILL) has biased composition (basic and acidic residues).

It belongs to the MINDY deubiquitinase family. FAM63 subfamily.

It catalyses the reaction Thiol-dependent hydrolysis of ester, thioester, amide, peptide and isopeptide bonds formed by the C-terminal Gly of ubiquitin (a 76-residue protein attached to proteins as an intracellular targeting signal).. Functionally, hydrolase that can specifically remove 'Lys-48'-linked conjugated ubiquitin from proteins. Has exodeubiquitinase activity and has a preference for long polyubiquitin chains. May play a regulatory role at the level of protein turnover. This is Ubiquitin carboxyl-terminal hydrolase MINDY-1 from Homo sapiens (Human).